The chain runs to 1091 residues: Voltage-dependent calcium channel subunit alpha-2/delta-3 (1091 aa).

The first 33 residues, 1–33 (MAGPGSLCCASRGASALLATALLYAALGDVVRS), serve as a signal peptide directing secretion. The Extracellular portion of the chain corresponds to 34–1068 (EQQIPLSVVK…HPEENARECG (1035 aa)). Asparagine 166 carries an N-linked (GlcNAc...) asparagine glycan. The 183-residue stretch at 256-438 (DVVILVDVSG…ENVMEYLHVL (183 aa)) folds into the VWFA domain. A divalent metal cation is bound by residues aspartate 262, serine 264, and serine 266. An MIDAS-like motif motif is present at residues 262–266 (DVSGS). N-linked (GlcNAc...) asparagine glycosylation is present at asparagine 309. Cysteine 412 and cysteine 1055 are oxidised to a cystine. The Cache domain occupies 452-549 (WTEAYIDSTL…RPLYEEGKKR (98 aa)). Asparagine 553 and asparagine 632 each carry an N-linked (GlcNAc...) asparagine glycan. Tyrosine 924 carries the post-translational modification Phosphotyrosine. The chain crosses the membrane as a helical span at residues 1069-1089 (GASSLQAQAALLLLPLVSSLF). The Cytoplasmic segment spans residues 1090 to 1091 (SR).

The protein belongs to the calcium channel subunit alpha-2/delta family. Dimer formed of alpha-2-2 and delta-2 chains; disulfide-linked. Voltage-dependent calcium channels are multisubunit complexes, consisting of alpha-1 (CACNA1), alpha-2 (CACNA2D), beta (CACNB) and delta (CACNA2D) subunits in a 1:1:1:1 ratio. In terms of processing, N-glycosylated. May be proteolytically processed into subunits alpha-2-3 and delta-3 that are disulfide-linked. It is however unclear whether such cleavage really takes place in vivo and has a functional role. In terms of tissue distribution, brain-specific. Predominantly expressed in the caudate putamen, entorhinal complex, hippocampus and cortex.

The protein localises to the membrane. Its function is as follows. The alpha-2/delta subunit of voltage-dependent calcium channels regulates calcium current density and activation/inactivation kinetics of the calcium channel. Acts as a regulatory subunit for P/Q-type calcium channel (CACNA1A), N-type (CACNA1B), L-type (CACNA1C OR CACNA1D) but not T-type (CACNA1G). This chain is Voltage-dependent calcium channel subunit alpha-2/delta-3 (Cacna2d3), found in Mus musculus (Mouse).